Reading from the N-terminus, the 280-residue chain is UPF0494 membrane protein C750.06c (280 aa).

Helical transmembrane passes span 107–127, 144–164, 178–198, and 199–219; these read WPLL…KFEV, IWVP…SLIF, VIIA…GMII, and AALG…LYFG.

The protein belongs to the UPF0494 family.

It localises to the cytoplasm. It is found in the vacuole. Its subcellular location is the membrane. In Schizosaccharomyces pombe (strain 972 / ATCC 24843) (Fission yeast), this protein is UPF0494 membrane protein C750.06c.